The sequence spans 304 residues: UDP-3-O-acyl-N-acetylglucosamine deacetylase (304 aa).

The Zn(2+) site is built by histidine 79, histidine 238, and aspartate 242. The active-site Proton donor is the histidine 265.

The protein belongs to the LpxC family. The cofactor is Zn(2+).

The catalysed reaction is a UDP-3-O-[(3R)-3-hydroxyacyl]-N-acetyl-alpha-D-glucosamine + H2O = a UDP-3-O-[(3R)-3-hydroxyacyl]-alpha-D-glucosamine + acetate. It functions in the pathway glycolipid biosynthesis; lipid IV(A) biosynthesis; lipid IV(A) from (3R)-3-hydroxytetradecanoyl-[acyl-carrier-protein] and UDP-N-acetyl-alpha-D-glucosamine: step 2/6. In terms of biological role, catalyzes the hydrolysis of UDP-3-O-myristoyl-N-acetylglucosamine to form UDP-3-O-myristoylglucosamine and acetate, the committed step in lipid A biosynthesis. The chain is UDP-3-O-acyl-N-acetylglucosamine deacetylase from Chromobacterium violaceum (strain ATCC 12472 / DSM 30191 / JCM 1249 / CCUG 213 / NBRC 12614 / NCIMB 9131 / NCTC 9757 / MK).